A 193-amino-acid chain; its full sequence is Putative RING finger protein ORF38 (193 aa).

The RING-type zinc-finger motif lies at 12–50 (CCICLDDEDVDRDNTIPCRHTVCRTCYVKPMLDQCPVCR).

This Magallana gigas (Pacific oyster) protein is Putative RING finger protein ORF38.